Consider the following 251-residue polypeptide: CDP-diacylglycerol pyrophosphatase (251 aa).

A helical transmembrane segment spans residues 4–24; that stretch reads AGLLFLVMIVIAVVAAGIGYW.

The protein belongs to the Cdh family.

It is found in the cell inner membrane. The catalysed reaction is a CDP-1,2-diacyl-sn-glycerol + H2O = a 1,2-diacyl-sn-glycero-3-phosphate + CMP + 2 H(+). It functions in the pathway phospholipid metabolism; CDP-diacylglycerol degradation; phosphatidate from CDP-diacylglycerol: step 1/1. In Escherichia coli (strain SE11), this protein is CDP-diacylglycerol pyrophosphatase.